We begin with the raw amino-acid sequence, 174 residues long: Small ribosomal subunit protein uS5c (174 aa).

The region spanning 17–80 is the S5 DRBM domain; it reads WEERVVQVKR…TDAKKHLVTV (64 aa).

Belongs to the universal ribosomal protein uS5 family. As to quaternary structure, part of the 30S ribosomal subunit. Contacts protein S4.

Its subcellular location is the plastid. It localises to the chloroplast. With S4 and S12 plays an important role in translational accuracy. This Porphyra purpurea (Red seaweed) protein is Small ribosomal subunit protein uS5c (rps5).